Reading from the N-terminus, the 419-residue chain is Aminoacyltransferase FemB (419 aa).

Belongs to the FemABX family. As to quaternary structure, homodimer. Interacts with FemA.

It is found in the cytoplasm. It catalyses the reaction MurNAc-L-Ala-D-isoglutaminyl-L-Lys-(N(6)-tri-Gly)-D-Ala-D-Ala-diphospho-di-trans,octa-cis-undecaprenyl-GlcNAc + 2 glycyl-tRNA(Gly) = MurNAc-L-Ala-D-isoglutaminyl-L-Lys-(N(6)-penta-Gly)-D-Ala-D-Ala-diphospho-di-trans,octa-cis-undecaprenyl-GlcNAc + 2 tRNA(Gly) + 2 H(+). Its function is as follows. Catalyzes the formation of the pentaglycine interpeptide bridge, which is characteristic of the S.aureus peptidoglycan. Adds glycines 4 and 5 of the pentaglycine bridge, using glycyl-tRNA(Gly) as donor. This Staphylococcus aureus (strain bovine RF122 / ET3-1) protein is Aminoacyltransferase FemB (femB).